The following is a 90-amino-acid chain: MDTQGVATDPQLQQFIEIESQKQRFQQLVHQMTEVCWEKCMDKPGPKLDSRTEVCFVNCVERFIDTSQFILNRLEQTQRSRGAFSETMTD.

Positions 36 to 59 (CWEKCMDKPGPKLDSRTEVCFVNC) match the Twin CX3C motif motif. 2 disulfide bridges follow: Cys36–Cys59 and Cys40–Cys55.

It belongs to the small Tim family. As to quaternary structure, heterohexamer; composed of 3 copies of TIMM8A and 3 copies of TIMM13, named soluble 70 kDa complex. Associates with the TIM22 complex, whose core is composed of TIMM22.

It localises to the mitochondrion inner membrane. Functionally, mitochondrial intermembrane chaperone that participates in the import and insertion of some multi-pass transmembrane proteins into the mitochondrial inner membrane. Also required for the transfer of beta-barrel precursors from the TOM complex to the sorting and assembly machinery (SAM complex) of the outer membrane. Acts as a chaperone-like protein that protects the hydrophobic precursors from aggregation and guide them through the mitochondrial intermembrane space. The TIMM8-TIMM13 complex mediates the import of some proteins while the predominant TIMM9-TIMM10 70 kDa complex mediates the import of much more proteins. The polypeptide is Mitochondrial import inner membrane translocase subunit Tim8 A (timm8a) (Danio rerio (Zebrafish)).